We begin with the raw amino-acid sequence, 443 residues long: Thymidine phosphorylase (443 aa).

It belongs to the thymidine/pyrimidine-nucleoside phosphorylase family. As to quaternary structure, homodimer.

The catalysed reaction is thymidine + phosphate = 2-deoxy-alpha-D-ribose 1-phosphate + thymine. The protein operates within pyrimidine metabolism; dTMP biosynthesis via salvage pathway; dTMP from thymine: step 1/2. Functionally, the enzymes which catalyze the reversible phosphorolysis of pyrimidine nucleosides are involved in the degradation of these compounds and in their utilization as carbon and energy sources, or in the rescue of pyrimidine bases for nucleotide synthesis. This is Thymidine phosphorylase from Aliivibrio fischeri (strain ATCC 700601 / ES114) (Vibrio fischeri).